The sequence spans 466 residues: Asparagine--tRNA ligase (466 aa).

This sequence belongs to the class-II aminoacyl-tRNA synthetase family. Homodimer.

Its subcellular location is the cytoplasm. It carries out the reaction tRNA(Asn) + L-asparagine + ATP = L-asparaginyl-tRNA(Asn) + AMP + diphosphate + H(+). This is Asparagine--tRNA ligase from Syntrophobacter fumaroxidans (strain DSM 10017 / MPOB).